Reading from the N-terminus, the 107-residue chain is U-scoloptoxin(18)-Er1a (107 aa).

An N-terminal signal peptide occupies residues Met1–Ala21.

The protein belongs to the scoloptoxin-18 family. In terms of processing, contains 5 disulfide bonds. As to expression, expressed by the venom gland.

The protein localises to the secreted. In Ethmostigmus rubripes (Giant centipede), this protein is U-scoloptoxin(18)-Er1a.